Reading from the N-terminus, the 128-residue chain is Large ribosomal subunit protein bL17 (128 aa).

It belongs to the bacterial ribosomal protein bL17 family. As to quaternary structure, part of the 50S ribosomal subunit. Contacts protein L32.

This chain is Large ribosomal subunit protein bL17, found in Petrotoga mobilis (strain DSM 10674 / SJ95).